The sequence spans 1316 residues: DNA-directed RNA polymerase subunit beta' (1316 aa).

4 residues coordinate Zn(2+): Cys-60, Cys-62, Cys-75, and Cys-78. Mg(2+)-binding residues include Asp-535, Asp-537, and Asp-539. Cys-891, Cys-968, Cys-975, and Cys-978 together coordinate Zn(2+).

Belongs to the RNA polymerase beta' chain family. In terms of assembly, the RNAP catalytic core consists of 2 alpha, 1 beta, 1 beta' and 1 omega subunit. When a sigma factor is associated with the core the holoenzyme is formed, which can initiate transcription. Requires Mg(2+) as cofactor. Zn(2+) is required as a cofactor.

It catalyses the reaction RNA(n) + a ribonucleoside 5'-triphosphate = RNA(n+1) + diphosphate. In terms of biological role, DNA-dependent RNA polymerase catalyzes the transcription of DNA into RNA using the four ribonucleoside triphosphates as substrates. In Mycobacterium bovis (strain BCG / Pasteur 1173P2), this protein is DNA-directed RNA polymerase subunit beta'.